A 152-amino-acid chain; its full sequence is Ribosome maturation factor RimP (152 aa).

This sequence belongs to the RimP family.

The protein resides in the cytoplasm. In terms of biological role, required for maturation of 30S ribosomal subunits. The sequence is that of Ribosome maturation factor RimP from Burkholderia ambifaria (strain MC40-6).